Consider the following 79-residue polypeptide: Small ribosomal subunit protein uS17 (79 aa).

The protein belongs to the universal ribosomal protein uS17 family. Part of the 30S ribosomal subunit.

Its function is as follows. One of the primary rRNA binding proteins, it binds specifically to the 5'-end of 16S ribosomal RNA. This is Small ribosomal subunit protein uS17 from Rhodospirillum rubrum (strain ATCC 11170 / ATH 1.1.1 / DSM 467 / LMG 4362 / NCIMB 8255 / S1).